The chain runs to 152 residues: Deoxyuridine 5'-triphosphate nucleotidohydrolase (152 aa).

Substrate contacts are provided by residues 71 to 73 (RSG), Asn84, 88 to 90 (LID), and Met98.

This sequence belongs to the dUTPase family. Requires Mg(2+) as cofactor.

It catalyses the reaction dUTP + H2O = dUMP + diphosphate + H(+). The protein operates within pyrimidine metabolism; dUMP biosynthesis; dUMP from dCTP (dUTP route): step 2/2. In terms of biological role, this enzyme is involved in nucleotide metabolism: it produces dUMP, the immediate precursor of thymidine nucleotides and it decreases the intracellular concentration of dUTP so that uracil cannot be incorporated into DNA. The protein is Deoxyuridine 5'-triphosphate nucleotidohydrolase of Shewanella halifaxensis (strain HAW-EB4).